The chain runs to 261 residues: Recombination protein bet (261 aa).

Gene bet protein functions in general recombination and in the late, rolling-circle mode of lambda DNA replication. Has a function similar to that of E.coli recT. It is a single-stranded DNA binding protein that can promote renaturation of DNA. The protein is Recombination protein bet (bet) of Escherichia coli (Bacteriophage lambda).